We begin with the raw amino-acid sequence, 224 residues long: Ribonuclease 3 (224 aa).

Residues 4–126 form the RNase III domain; that stretch reads LDRLQRQISY…IIGAISLDSS (123 aa). E39 contributes to the Mg(2+) binding site. D43 is an active-site residue. 2 residues coordinate Mg(2+): D112 and E115. E115 is a catalytic residue. The region spanning 153 to 223 is the DRBM domain; it reads DPKTRLQEYL…AEQILTALEI (71 aa).

Belongs to the ribonuclease III family. In terms of assembly, homodimer. The cofactor is Mg(2+).

The protein localises to the cytoplasm. The enzyme catalyses Endonucleolytic cleavage to 5'-phosphomonoester.. Digests double-stranded RNA. Involved in the processing of primary rRNA transcript to yield the immediate precursors to the large and small rRNAs (23S and 16S). Processes some mRNAs, and tRNAs when they are encoded in the rRNA operon. Processes pre-crRNA and tracrRNA of type II CRISPR loci if present in the organism. The sequence is that of Ribonuclease 3 from Mannheimia succiniciproducens (strain KCTC 0769BP / MBEL55E).